The sequence spans 303 residues: Porphobilinogen deaminase (303 aa).

C235 carries the post-translational modification S-(dipyrrolylmethanemethyl)cysteine.

The protein belongs to the HMBS family. Monomer. The cofactor is dipyrromethane.

The catalysed reaction is 4 porphobilinogen + H2O = hydroxymethylbilane + 4 NH4(+). It participates in porphyrin-containing compound metabolism; protoporphyrin-IX biosynthesis; coproporphyrinogen-III from 5-aminolevulinate: step 2/4. Functionally, tetrapolymerization of the monopyrrole PBG into the hydroxymethylbilane pre-uroporphyrinogen in several discrete steps. The chain is Porphobilinogen deaminase from Campylobacter fetus subsp. fetus (strain 82-40).